A 60-amino-acid chain; its full sequence is Large ribosomal subunit protein bL32 (60 aa).

The protein belongs to the bacterial ribosomal protein bL32 family.

This chain is Large ribosomal subunit protein bL32, found in Borreliella afzelii (strain PKo) (Borrelia afzelii).